A 653-amino-acid chain; its full sequence is DNA-directed RNA polymerase III subunit RPC-3 (653 aa).

Disordered regions lie at residues isoleucine 141–proline 186, aspartate 280–aspartate 309, and isoleucine 422–glycine 442. Positions alanine 159–glutamine 170 are enriched in basic and acidic residues. Acidic residues-rich tracts occupy residues proline 293–aspartate 309 and glutamate 424–glycine 433. Residues threonine 580 to leucine 601 form a leucine-zipper region.

It belongs to the RNA polymerase beta chain family. In terms of assembly, component of the RNA polymerase III (Pol III) complex consisting of 17 subunits.

The protein resides in the nucleus. Its function is as follows. DNA-dependent RNA polymerase catalyzes the transcription of DNA into RNA using the four ribonucleoside triphosphates as substrates. Specific core component of RNA polymerase III which synthesizes small RNAs, such as 5S rRNA and tRNAs. The chain is DNA-directed RNA polymerase III subunit RPC-3 (RPC-82) from Coccidioides immitis (strain RS) (Valley fever fungus).